The following is a 159-amino-acid chain: Dihydrofolate reductase (159 aa).

The region spanning 1-158 is the DHFR domain; it reads MISLIAALAV…HSYCFEILER (158 aa). Substrate is bound at residue Ile5. NADP(+) is bound by residues Ala7 and 13-19; that span reads VIGMENA. Asp27 is a binding site for substrate. Residue 45-46 participates in NADP(+) binding; sequence LT. 2 residues coordinate substrate: Arg52 and Arg57. NADP(+) contacts are provided by residues 63–64, Lys76, and 95–102; these read SS and GGGRVYEQ. Thr113 contributes to the substrate binding site.

The protein belongs to the dihydrofolate reductase family.

The enzyme catalyses (6S)-5,6,7,8-tetrahydrofolate + NADP(+) = 7,8-dihydrofolate + NADPH + H(+). It participates in cofactor biosynthesis; tetrahydrofolate biosynthesis; 5,6,7,8-tetrahydrofolate from 7,8-dihydrofolate: step 1/1. Its function is as follows. Key enzyme in folate metabolism. Catalyzes an essential reaction for de novo glycine and purine synthesis, and for DNA precursor synthesis. This Klebsiella aerogenes (Enterobacter aerogenes) protein is Dihydrofolate reductase (folA).